The following is a 299-amino-acid chain: Tyrosine recombinase XerD (299 aa).

One can recognise a Core-binding (CB) domain in the interval Gln-3 to Tyr-88. In terms of domain architecture, Tyr recombinase spans Arg-109–Gln-293. Catalysis depends on residues Arg-149, Lys-173, His-245, Arg-248, and His-271. Tyr-280 serves as the catalytic O-(3'-phospho-DNA)-tyrosine intermediate.

The protein belongs to the 'phage' integrase family. XerD subfamily. As to quaternary structure, forms a cyclic heterotetrameric complex composed of two molecules of XerC and two molecules of XerD, in which XerC interacts with XerD via its C-terminal region, XerD interacts with XerC via its C-terminal region and so on.

It localises to the cytoplasm. FtsK may regulate the catalytic switch between XerC and XerD in the heterotetrameric complex during the two steps of the recombination process. In terms of biological role, site-specific tyrosine recombinase, which acts by catalyzing the cutting and rejoining of the recombining DNA molecules. Binds cooperatively to specific DNA consensus sequences that are separated from XerC binding sites by a short central region, forming the heterotetrameric XerC-XerD complex that recombines DNA substrates. The complex is essential to convert dimers of the bacterial chromosome into monomers to permit their segregation at cell division. It also contributes to the segregational stability of plasmids. In the complex XerD specifically exchanges the bottom DNA strands. The polypeptide is Tyrosine recombinase XerD (Yersinia pestis).